The sequence spans 474 residues: 3-isopropylmalate dehydratase large subunit (474 aa).

C353, C414, and C417 together coordinate [4Fe-4S] cluster.

This sequence belongs to the aconitase/IPM isomerase family. LeuC type 1 subfamily. In terms of assembly, heterodimer of LeuC and LeuD. [4Fe-4S] cluster is required as a cofactor.

It carries out the reaction (2R,3S)-3-isopropylmalate = (2S)-2-isopropylmalate. It participates in amino-acid biosynthesis; L-leucine biosynthesis; L-leucine from 3-methyl-2-oxobutanoate: step 2/4. Catalyzes the isomerization between 2-isopropylmalate and 3-isopropylmalate, via the formation of 2-isopropylmaleate. In Xylella fastidiosa (strain M23), this protein is 3-isopropylmalate dehydratase large subunit.